Consider the following 946-residue polypeptide: Protocadherin alpha-10 (946 aa).

The first 30 residues, 1-30 (MSCVAMKYCHESWCLLLSLLLFAIWEPGSG), serve as a signal peptide directing secretion. Cadherin domains lie at 31–134 (QLRY…PPVF), 135–243 (PTTE…APAF), 244–351 (DRAI…APKI), 352–456 (IVTS…APAF), 457–566 (AQSE…APTL), and 582–679 (VPRS…APKA). Residues 31–697 (QLRYSVPEEA…ASESSVVDVN (667 aa)) lie on the Extracellular side of the membrane. N-linked (GlcNAc...) asparagine glycosylation is present at Asn-258. Residue Asn-549 is glycosylated (N-linked (GlcNAc...) asparagine). Residues 698–718 (VYLIIAICAVSSLLVLTLVLY) form a helical membrane-spanning segment. The Cytoplasmic portion of the chain corresponds to 719-946 (TALRCSALPT…GNSTTDNSDQ (228 aa)). PXXP repeat units lie at residues 734 to 737 (PGKP), 774 to 777 (PSVP), 795 to 798 (PRQP), 828 to 831 (PGGP), 869 to 872 (PGNP), and 887 to 890 (PGSP). The segment at 734 to 890 (PGKPMLVCSS…PDKFIIPGSP (157 aa)) is 6 X 4 AA repeats of P-X-X-P. Disordered stretches follow at residues 826-852 (AGPGGPDQQWPTVSSATPEPEAGEVSP) and 865-946 (FKYG…NSDQ). The span at 905–919 (DKSDFITFGKKEETK) shows a compositional bias: basic and acidic residues.

The protein resides in the cell membrane. Its function is as follows. Potential calcium-dependent cell-adhesion protein. May be involved in the establishment and maintenance of specific neuronal connections in the brain. This chain is Protocadherin alpha-10, found in Mus musculus (Mouse).